Here is a 698-residue protein sequence, read N- to C-terminus: Polyphosphate kinase 1 (698 aa).

N46 lines the ATP pocket. 2 residues coordinate Mg(2+): R377 and R407. H437 functions as the Phosphohistidine intermediate in the catalytic mechanism. The ATP site is built by Y470, R566, and H594.

The protein belongs to the polyphosphate kinase 1 (PPK1) family. Requires Mg(2+) as cofactor. In terms of processing, an intermediate of this reaction is the autophosphorylated ppk in which a phosphate is covalently linked to a histidine residue through a N-P bond.

The enzyme catalyses [phosphate](n) + ATP = [phosphate](n+1) + ADP. Functionally, catalyzes the reversible transfer of the terminal phosphate of ATP to form a long-chain polyphosphate (polyP). The polypeptide is Polyphosphate kinase 1 (Chlorobaculum tepidum (strain ATCC 49652 / DSM 12025 / NBRC 103806 / TLS) (Chlorobium tepidum)).